The sequence spans 162 residues: Ribosome maturation factor RimP (162 aa).

The protein belongs to the RimP family.

The protein localises to the cytoplasm. Required for maturation of 30S ribosomal subunits. This is Ribosome maturation factor RimP from Syntrophotalea carbinolica (strain DSM 2380 / NBRC 103641 / GraBd1) (Pelobacter carbinolicus).